Here is a 223-residue protein sequence, read N- to C-terminus: Ribose-5-phosphate isomerase A (223 aa).

Substrate-binding positions include 32-35 (TGST), 85-88 (DGAD), and 98-101 (KGGG). The active-site Proton acceptor is Glu107. Substrate is bound at residue Lys125.

It belongs to the ribose 5-phosphate isomerase family. In terms of assembly, homodimer.

It carries out the reaction aldehydo-D-ribose 5-phosphate = D-ribulose 5-phosphate. The protein operates within carbohydrate degradation; pentose phosphate pathway; D-ribose 5-phosphate from D-ribulose 5-phosphate (non-oxidative stage): step 1/1. In terms of biological role, catalyzes the reversible conversion of ribose-5-phosphate to ribulose 5-phosphate. The polypeptide is Ribose-5-phosphate isomerase A (Pseudomonas savastanoi pv. phaseolicola (strain 1448A / Race 6) (Pseudomonas syringae pv. phaseolicola (strain 1448A / Race 6))).